We begin with the raw amino-acid sequence, 1047 residues long: Atrial natriuretic peptide receptor 2 (1047 aa).

The signal sequence occupies residues 1–22; sequence MALPSLLLLVAALAGGVRPPGA. At 23-458 the chain is on the extracellular side; it reads RNLTLAVVLP…DKTPLSTLAI (436 aa). N-linked (GlcNAc...) asparagine glycosylation is found at N24 and N35. A disulfide bond links C75 and C101. 5 N-linked (GlcNAc...) asparagine glycosylation sites follow: N161, N195, N244, N277, and N349. A helical transmembrane segment spans residues 459–478; the sequence is VALGTGITFIMFGVSSFLIF. The Cytoplasmic segment spans residues 479 to 1047; that stretch reads RKLMLEKELA…GERKGPPGLL (569 aa). A Phosphoserine modification is found at S513. In terms of domain architecture, Protein kinase spans 513–786; it reads SRLTLSLRGS…PDFGQIKGFI (274 aa). T516 is modified (phosphothreonine). Phosphoserine is present on residues S518, S522, S523, and S526. T529 is modified (phosphothreonine). The region spanning 861-991 is the Guanylate cyclase domain; that stretch reads TIYFSDIVGF…DTVNTASRME (131 aa).

It belongs to the adenylyl cyclase class-4/guanylyl cyclase family. Phosphorylated. Phosphorylation of the protein kinase-like domain is required for full activation by CNP. Post-translationally, glycosylated.

The protein localises to the cell membrane. The enzyme catalyses GTP = 3',5'-cyclic GMP + diphosphate. Functionally, receptor for the C-type natriuretic peptide NPPC/CNP hormone. Has guanylate cyclase activity upon binding of its ligand. May play a role in the regulation of skeletal growth. In Homo sapiens (Human), this protein is Atrial natriuretic peptide receptor 2 (NPR2).